The sequence spans 283 residues: Shikimate kinase (283 aa).

86–96 provides a ligand contact to ATP; sequence PIKSGLSSSSA.

This sequence belongs to the GHMP kinase family. Archaeal shikimate kinase subfamily.

It localises to the cytoplasm. It carries out the reaction shikimate + ATP = 3-phosphoshikimate + ADP + H(+). It participates in metabolic intermediate biosynthesis; chorismate biosynthesis; chorismate from D-erythrose 4-phosphate and phosphoenolpyruvate: step 5/7. In Methanococcus maripaludis (strain C6 / ATCC BAA-1332), this protein is Shikimate kinase.